The chain runs to 128 residues: Kinetoplast-associated protein 4 (128 aa).

The propeptide occupies 1–10; the sequence is MLRFVPRRLA. The interval 60 to 87 is disordered; the sequence is AHPGFKRKEKEPKELKAAKAAKTSTPRA. The span at 65 to 76 shows a compositional bias: basic and acidic residues; it reads KRKEKEPKELKA.

Belongs to the KAP family. In terms of assembly, associates with the kinetoplast DNA network.

The protein localises to the mitochondrion matrix. The protein resides in the kinetoplast. In terms of biological role, histone H1-like DNA-binding protein involved in the organization and segregation of kinetoplast DNA (kDNA). The mitochondrial DNA of kinetoplastid protozoa consists of about 5,000 minicircles and 20 to 30 maxicircles. These circular DNAs are held together by catenation into a highly organized compact disk structure referred to as a kinetoplast DNA (kDNA) network. Binds preferentially to a specific fragment of minicircle DNA and is able to compact kDNA networks through DNA charge neutralization and condensation. The protein is Kinetoplast-associated protein 4 (KAP4) of Crithidia fasciculata.